The primary structure comprises 548 residues: uncharacterized protein (548 aa).

2 short-chain dehydrogenase/reductase regions span residues 1–250 and 271–548; these read MDDR…WMSV and PVED…LLSP. Residue 12–37 participates in NADP(+) binding; that stretch reads IVVTGAAGGIGRALVDIFAANGDVVV. S141 provides a ligand contact to substrate. The active-site Proton acceptor is the Y154. 280-304 contacts NADP(+); sequence VIVMGGATGVGAAIARRFAENGDTV. Y420 (proton acceptor) is an active-site residue.

This sequence belongs to the short-chain dehydrogenases/reductases (SDR) family.

This is an uncharacterized protein from Sinorhizobium fredii (strain NBRC 101917 / NGR234).